Reading from the N-terminus, the 102-residue chain is Putative pterin-4-alpha-carbinolamine dehydratase (102 aa).

The protein belongs to the pterin-4-alpha-carbinolamine dehydratase family.

It catalyses the reaction (4aS,6R)-4a-hydroxy-L-erythro-5,6,7,8-tetrahydrobiopterin = (6R)-L-erythro-6,7-dihydrobiopterin + H2O. The chain is Putative pterin-4-alpha-carbinolamine dehydratase from Burkholderia cenocepacia (strain HI2424).